Reading from the N-terminus, the 34-residue chain is Mu-theraphotoxin-Df1a (34 aa).

Intrachain disulfides connect Cys-2–Cys-16, Cys-9–Cys-21, and Cys-15–Cys-28. Phenylalanine amide is present on Phe-34.

It belongs to the neurotoxin 10 (Hwtx-1) family. 54 (ProTx-1) subfamily. In terms of processing, C-terminal amidation is important for the high potency of the toxin. Expressed by the venom gland.

The protein localises to the secreted. Its function is as follows. Inhibits sodium channel Nav1.7/SCN9A with high potency (IC(50)=117 nM) and Nav1.2/SCN2A, Nav1.3/SCN3A, Nav1.6/SCN8A and Nav1.5/SCN5 with weaker potency. Also inhibits voltage-gated calcium channel Cav3.1/CACNA1G, Cav3.2/CACNA1H and Cav3.3/CACNA1I. The protein is Mu-theraphotoxin-Df1a of Davus fasciatus (Costa Rican tiger rump).